A 79-amino-acid polypeptide reads, in one-letter code: WAP four-disulfide core domain protein 10A (79 aa).

A signal peptide spans 1–21; it reads MAPQTLLPVLVLCVLLLQAQG. In terms of domain architecture, WAP spans 34–79; the sequence is LSPEIKVCQQQPKLYLCKHLCESHRDCQANNICCSTYCGNVCMSIL. 4 disulfide bridges follow: Cys41-Cys67, Cys50-Cys71, Cys54-Cys66, and Cys60-Cys75.

The protein resides in the secreted. In Homo sapiens (Human), this protein is WAP four-disulfide core domain protein 10A (WFDC10A).